A 405-amino-acid chain; its full sequence is Argininosuccinate synthase (405 aa).

Residues 10 to 18 (AYSGGLDTS) and alanine 37 each bind ATP. 2 residues coordinate L-citrulline: tyrosine 88 and serine 93. Glycine 118 is an ATP binding site. Threonine 120, asparagine 124, and aspartate 125 together coordinate L-aspartate. Asparagine 124 lines the L-citrulline pocket. Arginine 128, serine 179, serine 188, glutamate 264, and tyrosine 276 together coordinate L-citrulline.

The protein belongs to the argininosuccinate synthase family. Type 1 subfamily. As to quaternary structure, homotetramer.

The protein resides in the cytoplasm. It carries out the reaction L-citrulline + L-aspartate + ATP = 2-(N(omega)-L-arginino)succinate + AMP + diphosphate + H(+). Its pathway is amino-acid biosynthesis; L-arginine biosynthesis; L-arginine from L-ornithine and carbamoyl phosphate: step 2/3. This chain is Argininosuccinate synthase, found in Pseudomonas syringae pv. syringae (strain B728a).